A 147-amino-acid polypeptide reads, in one-letter code: UPF0306 protein YhbP (147 aa).

Belongs to the UPF0306 family.

This Shigella dysenteriae serotype 1 (strain Sd197) protein is UPF0306 protein YhbP.